An 89-amino-acid chain; its full sequence is Small ribosomal subunit protein uS15 (89 aa).

It belongs to the universal ribosomal protein uS15 family. Part of the 30S ribosomal subunit. Forms a bridge to the 50S subunit in the 70S ribosome, contacting the 23S rRNA.

Its function is as follows. One of the primary rRNA binding proteins, it binds directly to 16S rRNA where it helps nucleate assembly of the platform of the 30S subunit by binding and bridging several RNA helices of the 16S rRNA. Forms an intersubunit bridge (bridge B4) with the 23S rRNA of the 50S subunit in the ribosome. The polypeptide is Small ribosomal subunit protein uS15 (Herminiimonas arsenicoxydans).